The sequence spans 33 residues: Brevinin-2DYd (33 aa).

A disulfide bond links cysteine 27 and cysteine 33.

Expressed by the skin glands.

The protein localises to the secreted. In terms of biological role, antimicrobial peptide. A mixture of Brevinin-2DYc/2DYd is active against the Gram-positive bacterium S.aureus (MIC=15 uM) and the Gram-negative bacterium E.coli (MIC=15 uM). The polypeptide is Brevinin-2DYd (Rana dybowskii (Dybovsky's frog)).